The primary structure comprises 20 residues: Putative serine protease (20 aa).

The protein belongs to the peptidase S1 family.

Its subcellular location is the secreted. Its function is as follows. Binds the A.niger cell wall component alpha-1,3-glucan, a fungal pathogen-associated molecular pattern (PAMP) that activates the host immune response. The sequence is that of Putative serine protease from Galleria mellonella (Greater wax moth).